The sequence spans 522 residues: MSNRVIIFDTTLRDGEQALAASLSVKEKLQIAMALERLGVDVMEVGFPVSSPGDFESVQTIARTIKNSRVCALSRALEKDIDAAAQALSVAEQFRIHTFISTSTIHVESKLKRSFDQVLEMAVGAVKYARRFTDDVEFSCEDAGRTPIDNLCRMVEAAILAGARTINIPDTVGYTVPSEFGNIIQTLFNRVPNIDQAVISVHCHDDLGLSVANSITAVQHGARQIECTINGIGERAGNCSLEEIAMILATRKGMLGLETGINAKEIHRTSNLVSQLCNMPVQANKAIVGANAFTHSSGIHQDGMLKAQNTYEIMTPESIGLNRNNLNMTSRSGRHVIKHRMEEMGYSEHDYNMDALYEEFLKLADKKGQVFDYDLEALAFMEAQAEEDNHYQLQQLVVQSDSTEGVATATVRIEVGGEIKTEAATGNGPVDAAYNAIARATDRRIDIISYKLGAKGVGQNALGQVDITAVYHEQNFHGVGLATDVVEASARALVHVMNLTCRADKVADYKQSMQKNRELGGV.

The Pyruvate carboxyltransferase domain maps to 5 to 267; it reads VIIFDTTLRD…ETGINAKEIH (263 aa). The Mn(2+) site is built by Asp-14, His-202, His-204, and Asn-238. Residues 392 to 522 form a regulatory domain region; sequence QLQQLVVQSD…MQKNRELGGV (131 aa).

It belongs to the alpha-IPM synthase/homocitrate synthase family. LeuA type 1 subfamily. Homodimer. The cofactor is Mn(2+).

The protein localises to the cytoplasm. It catalyses the reaction 3-methyl-2-oxobutanoate + acetyl-CoA + H2O = (2S)-2-isopropylmalate + CoA + H(+). The protein operates within amino-acid biosynthesis; L-leucine biosynthesis; L-leucine from 3-methyl-2-oxobutanoate: step 1/4. In terms of biological role, catalyzes the condensation of the acetyl group of acetyl-CoA with 3-methyl-2-oxobutanoate (2-ketoisovalerate) to form 3-carboxy-3-hydroxy-4-methylpentanoate (2-isopropylmalate). The polypeptide is 2-isopropylmalate synthase (Shewanella baltica (strain OS185)).